Reading from the N-terminus, the 381-residue chain is Protein-glutamate methylesterase/protein-glutamine glutaminase 1 (381 aa).

Residues 14 to 132 (RVMLVDDSAV…DLAGGVDFKS (119 aa)) enclose the Response regulatory domain. A 4-aspartylphosphate modification is found at Asp65. The tract at residues 143 to 173 (QARRAGARPARPGGPPATRPVIASTSPRTPV) is disordered. The span at 144-153 (ARRAGARPAR) shows a compositional bias: low complexity. A CheB-type methylesterase domain is found at 188 to 381 (PEPPDIIAIG…PWIMKLAARR (194 aa)). Active-site residues include Ser199, His227, and Asp323.

The protein belongs to the CheB family. Phosphorylated by CheA. Phosphorylation of the N-terminal regulatory domain activates the methylesterase activity.

The protein localises to the cytoplasm. It carries out the reaction [protein]-L-glutamate 5-O-methyl ester + H2O = L-glutamyl-[protein] + methanol + H(+). The catalysed reaction is L-glutaminyl-[protein] + H2O = L-glutamyl-[protein] + NH4(+). Its function is as follows. Involved in chemotaxis. Part of a chemotaxis signal transduction system that modulates chemotaxis in response to various stimuli. Catalyzes the demethylation of specific methylglutamate residues introduced into the chemoreceptors (methyl-accepting chemotaxis proteins or MCP) by CheR. Also mediates the irreversible deamidation of specific glutamine residues to glutamic acid. In Paramagnetospirillum magneticum (strain ATCC 700264 / AMB-1) (Magnetospirillum magneticum), this protein is Protein-glutamate methylesterase/protein-glutamine glutaminase 1.